Reading from the N-terminus, the 119-residue chain is Small ribosomal subunit protein uS17 (119 aa).

Low complexity predominate over residues Met-1–Gly-21. The interval Met-1–Arg-44 is disordered.

This sequence belongs to the universal ribosomal protein uS17 family. As to quaternary structure, part of the 30S ribosomal subunit.

Functionally, one of the primary rRNA binding proteins, it binds specifically to the 5'-end of 16S ribosomal RNA. The sequence is that of Small ribosomal subunit protein uS17 from Mycobacterium marinum (strain ATCC BAA-535 / M).